The sequence spans 447 residues: 26S proteasome non-ATPase regulatory subunit 12 (447 aa).

The tract at residues 1-23 is disordered; the sequence is MTIGLEPAVSSKTKDKMEQDLSP. Residues 240–411 form the PCI domain; sequence NYIEIARCYL…GIATFTTTND (172 aa).

Belongs to the proteasome subunit p55 family.

Its function is as follows. Acts as a regulatory subunit of the 26S proteasome which is involved in the ATP-dependent degradation of ubiquitinated proteins. This is 26S proteasome non-ATPase regulatory subunit 12 (psmD12) from Dictyostelium discoideum (Social amoeba).